The following is a 158-amino-acid chain: Acetolactate synthase small subunit (158 aa).

Residues 4 to 79 form the ACT domain; sequence MIIAKLHNVT…DVIEVADITD (76 aa).

The protein belongs to the acetolactate synthase small subunit family. In terms of assembly, dimer of large and small chains.

The catalysed reaction is 2 pyruvate + H(+) = (2S)-2-acetolactate + CO2. It participates in amino-acid biosynthesis; L-isoleucine biosynthesis; L-isoleucine from 2-oxobutanoate: step 1/4. It functions in the pathway amino-acid biosynthesis; L-valine biosynthesis; L-valine from pyruvate: step 1/4. This Lactococcus lactis subsp. lactis (strain IL1403) (Streptococcus lactis) protein is Acetolactate synthase small subunit (ilvH).